The sequence spans 233 residues: Probable 2-phosphosulfolactate phosphatase (233 aa).

The protein belongs to the ComB family. Mg(2+) serves as cofactor.

The catalysed reaction is (2R)-O-phospho-3-sulfolactate + H2O = (2R)-3-sulfolactate + phosphate. This is Probable 2-phosphosulfolactate phosphatase from Clostridium tetani (strain Massachusetts / E88).